A 498-amino-acid chain; its full sequence is Probable cytosol aminopeptidase (498 aa).

The Mn(2+) site is built by lysine 271 and aspartate 276. Lysine 283 is an active-site residue. Aspartate 294, aspartate 353, and glutamate 355 together coordinate Mn(2+). Arginine 357 is an active-site residue.

The protein belongs to the peptidase M17 family. Mn(2+) serves as cofactor.

Its subcellular location is the cytoplasm. It carries out the reaction Release of an N-terminal amino acid, Xaa-|-Yaa-, in which Xaa is preferably Leu, but may be other amino acids including Pro although not Arg or Lys, and Yaa may be Pro. Amino acid amides and methyl esters are also readily hydrolyzed, but rates on arylamides are exceedingly low.. The enzyme catalyses Release of an N-terminal amino acid, preferentially leucine, but not glutamic or aspartic acids.. Its function is as follows. Presumably involved in the processing and regular turnover of intracellular proteins. Catalyzes the removal of unsubstituted N-terminal amino acids from various peptides. In Bordetella petrii (strain ATCC BAA-461 / DSM 12804 / CCUG 43448), this protein is Probable cytosol aminopeptidase.